We begin with the raw amino-acid sequence, 179 residues long: Large ribosomal subunit protein uL5 (179 aa).

Belongs to the universal ribosomal protein uL5 family. In terms of assembly, part of the 50S ribosomal subunit; part of the 5S rRNA/L5/L18/L25 subcomplex. Contacts the 5S rRNA and the P site tRNA. Forms a bridge to the 30S subunit in the 70S ribosome.

In terms of biological role, this is one of the proteins that bind and probably mediate the attachment of the 5S RNA into the large ribosomal subunit, where it forms part of the central protuberance. In the 70S ribosome it contacts protein S13 of the 30S subunit (bridge B1b), connecting the 2 subunits; this bridge is implicated in subunit movement. Contacts the P site tRNA; the 5S rRNA and some of its associated proteins might help stabilize positioning of ribosome-bound tRNAs. The polypeptide is Large ribosomal subunit protein uL5 (Prochlorococcus marinus (strain MIT 9211)).